We begin with the raw amino-acid sequence, 201 residues long: Large ribosomal subunit protein uL4 (201 aa).

Positions 44–71 are disordered; sequence RAQKTRAEVTGSGKKPWRQKGTGRARSG.

It belongs to the universal ribosomal protein uL4 family. Part of the 50S ribosomal subunit.

Functionally, one of the primary rRNA binding proteins, this protein initially binds near the 5'-end of the 23S rRNA. It is important during the early stages of 50S assembly. It makes multiple contacts with different domains of the 23S rRNA in the assembled 50S subunit and ribosome. Forms part of the polypeptide exit tunnel. The protein is Large ribosomal subunit protein uL4 of Shigella flexneri serotype 5b (strain 8401).